Reading from the N-terminus, the 151-residue chain is Large-conductance mechanosensitive channel (151 aa).

Transmembrane regions (helical) follow at residues 19–39 (VGIIIGGAFTGIVKSLVGDVL) and 85–105 (GLFINAFISFVIMAVAVFFLV).

Belongs to the MscL family. Homopentamer.

The protein resides in the cell inner membrane. Channel that opens in response to stretch forces in the membrane lipid bilayer. May participate in the regulation of osmotic pressure changes within the cell. The chain is Large-conductance mechanosensitive channel from Chlorobaculum parvum (strain DSM 263 / NCIMB 8327) (Chlorobium vibrioforme subsp. thiosulfatophilum).